The primary structure comprises 130 residues: Large ribosomal subunit protein bL12 (130 aa).

It belongs to the bacterial ribosomal protein bL12 family. As to quaternary structure, homodimer. Part of the ribosomal stalk of the 50S ribosomal subunit. Forms a multimeric L10(L12)X complex, where L10 forms an elongated spine to which 2 to 4 L12 dimers bind in a sequential fashion. Binds GTP-bound translation factors.

In terms of biological role, forms part of the ribosomal stalk which helps the ribosome interact with GTP-bound translation factors. Is thus essential for accurate translation. This is Large ribosomal subunit protein bL12 from Prochlorococcus marinus (strain SARG / CCMP1375 / SS120).